We begin with the raw amino-acid sequence, 204 residues long: FMN-dependent NADH:quinone oxidoreductase (204 aa).

Position 9 (S9) interacts with FMN.

This sequence belongs to the azoreductase type 1 family. In terms of assembly, homodimer. The cofactor is FMN.

The enzyme catalyses 2 a quinone + NADH + H(+) = 2 a 1,4-benzosemiquinone + NAD(+). It catalyses the reaction N,N-dimethyl-1,4-phenylenediamine + anthranilate + 2 NAD(+) = 2-(4-dimethylaminophenyl)diazenylbenzoate + 2 NADH + 2 H(+). In terms of biological role, quinone reductase that provides resistance to thiol-specific stress caused by electrophilic quinones. Also exhibits azoreductase activity. Catalyzes the reductive cleavage of the azo bond in aromatic azo compounds to the corresponding amines. The sequence is that of FMN-dependent NADH:quinone oxidoreductase from Thiobacillus denitrificans (strain ATCC 25259 / T1).